Reading from the N-terminus, the 473-residue chain is ATP synthase subunit beta 2 (473 aa).

158-165 (GGAGVGKT) provides a ligand contact to ATP.

This sequence belongs to the ATPase alpha/beta chains family. In terms of assembly, F-type ATPases have 2 components, CF(1) - the catalytic core - and CF(0) - the membrane proton channel. CF(1) has five subunits: alpha(3), beta(3), gamma(1), delta(1), epsilon(1). CF(0) has three main subunits: a(1), b(2) and c(9-12). The alpha and beta chains form an alternating ring which encloses part of the gamma chain. CF(1) is attached to CF(0) by a central stalk formed by the gamma and epsilon chains, while a peripheral stalk is formed by the delta and b chains.

It is found in the cell membrane. It carries out the reaction ATP + H2O + 4 H(+)(in) = ADP + phosphate + 5 H(+)(out). Produces ATP from ADP in the presence of a proton gradient across the membrane. The catalytic sites are hosted primarily by the beta subunits. This Listeria monocytogenes serotype 4b (strain F2365) protein is ATP synthase subunit beta 2.